The following is a 297-amino-acid chain: Vacuolar protein sorting-associated protein 26C (297 aa).

Belongs to the VPS26 family. In terms of assembly, component of the commander complex that is essential for endosomal recycling of transmembrane cargos; the commander complex is composed of the CCC subcomplex and the retriever subcomplex. Component of the heterotrimeric retriever complex consisting of VPS26C, VPS29 and VPS35L; within the complex interacts with VPS35L. Interacts with SNX17 (via C-terminus); the interaction is direct and associates SNX17 with the retriever complex. Interacts with SNX31; the interaction is direct.

The protein resides in the endosome. Its function is as follows. Component of the commander complex that is essential for endosomal recycling of transmembrane cargos; the commander complex is composed of the CCC subcomplex and the retriever subcomplex. Component of the retriever complex, which is a heterotrimeric complex related to retromer cargo-selective complex (CSC) and essential for retromer-independent retrieval and recycling of numerous cargos such as integrin alpha-5/beta-1 (ITGA5:ITGB1). The recruitment of the retriever complex to the endosomal membrane involves CCC and WASH complexes. In the endosomes, drives the retriever and recycling of NxxY-motif-containing cargo proteins by coupling to SNX17, a cargo essential for the homeostatic maintenance of numerous cell surface proteins associated with processes that include cell migration, cell adhesion, nutrient supply and cell signaling. This is Vacuolar protein sorting-associated protein 26C from Mus musculus (Mouse).